The primary structure comprises 395 residues: Elongation factor Tu (395 aa).

One can recognise a tr-type G domain in the interval 10–204 (KPHVNIGTIG…AVDNYIPHPV (195 aa)). A G1 region spans residues 19-26 (GHVDHGKT). 19–26 (GHVDHGKT) contributes to the GTP binding site. Residue threonine 26 coordinates Mg(2+). Residues 60 to 64 (GITIS) form a G2 region. A G3 region spans residues 81-84 (DCPG). GTP is bound by residues 81–85 (DCPGH) and 136–139 (NKVD). The tract at residues 136–139 (NKVD) is G4. A G5 region spans residues 174–176 (SAL).

This sequence belongs to the TRAFAC class translation factor GTPase superfamily. Classic translation factor GTPase family. EF-Tu/EF-1A subfamily. As to quaternary structure, monomer.

It is found in the cytoplasm. It catalyses the reaction GTP + H2O = GDP + phosphate + H(+). Its function is as follows. GTP hydrolase that promotes the GTP-dependent binding of aminoacyl-tRNA to the A-site of ribosomes during protein biosynthesis. The sequence is that of Elongation factor Tu from Rickettsia akari (strain Hartford).